Reading from the N-terminus, the 96-residue chain is Large ribosomal subunit protein bL28 (96 aa).

Positions 1 to 24 (MSRSCELTGKGVQSGHNVSHANNK) are disordered.

It belongs to the bacterial ribosomal protein bL28 family.

This Sinorhizobium fredii (strain NBRC 101917 / NGR234) protein is Large ribosomal subunit protein bL28.